A 301-amino-acid polypeptide reads, in one-letter code: Thioredoxin-related transmembrane protein 2-A (301 aa).

A signal peptide spans 1-19 (MSLIRGLISTIYYLPKIYK). At 20–111 (WFYRPYYFLS…VVLFFRVDLR (92 aa)) the chain is on the extracellular side. The helical transmembrane segment at 112–132 (FGLLYLTLCVVFLITCKPPAY) threads the bilayer. Residues 122 to 269 (VFLITCKPPA…IFQKYKKFSK (148 aa)) form the Thioredoxin domain. Residues 133–301 (MGPENIKYFR…EEDSESKKDK (169 aa)) lie on the Cytoplasmic side of the membrane. Positions 268–301 (SKGEKPEEPQPVLEEESESPLEEEEEDSESKKDK) are disordered. Residues 280–295 (LEEESESPLEEEEEDS) show a composition bias toward acidic residues. The Di-lysine motif signature appears at 298–301 (KKDK).

Monomer. Homodimer; disulfide-linked. Occurs in both reduced and oxidized monomeric form. Oxidative conditions increase homodimerization.

It localises to the endoplasmic reticulum membrane. The protein resides in the mitochondrion membrane. In terms of biological role, endoplasmic reticulum and mitochondria-associated protein that probably functions as a regulator of cellular redox state and thereby regulates protein post-translational modification, protein folding and mitochondrial activity. In Danio rerio (Zebrafish), this protein is Thioredoxin-related transmembrane protein 2-A.